Reading from the N-terminus, the 142-residue chain is Ribosome maturation factor RimP (142 aa).

It belongs to the RimP family.

The protein localises to the cytoplasm. In terms of biological role, required for maturation of 30S ribosomal subunits. This chain is Ribosome maturation factor RimP, found in Wolinella succinogenes (strain ATCC 29543 / DSM 1740 / CCUG 13145 / JCM 31913 / LMG 7466 / NCTC 11488 / FDC 602W) (Vibrio succinogenes).